The sequence spans 288 residues: N-glycosylase/DNA lyase (288 aa).

8-oxoguanine contacts are provided by Gln-35, Ser-62, and Trp-73. Positions 134-203 are helix-hairpin-helix; the sequence is NPLVLVERPS…VACASISSEM (70 aa). Catalysis depends on Lys-160, which acts as the Schiff-base intermediate with DNA. 2 residues coordinate 8-oxoguanine: Phe-164 and Pro-189. Asp-191 is an active-site residue. The 8-oxoguanine site is built by Asp-238 and Trp-242.

It belongs to the archaeal N-glycosylase/DNA lyase (AGOG) family.

The catalysed reaction is 2'-deoxyribonucleotide-(2'-deoxyribose 5'-phosphate)-2'-deoxyribonucleotide-DNA = a 3'-end 2'-deoxyribonucleotide-(2,3-dehydro-2,3-deoxyribose 5'-phosphate)-DNA + a 5'-end 5'-phospho-2'-deoxyribonucleoside-DNA + H(+). Functionally, DNA repair enzyme that is part of the base excision repair (BER) pathway; protects from oxidative damage by removing the major product of DNA oxidation, 8-oxoguanine (GO), from single- and double-stranded DNA substrates. The polypeptide is N-glycosylase/DNA lyase (Aeropyrum pernix (strain ATCC 700893 / DSM 11879 / JCM 9820 / NBRC 100138 / K1)).